The chain runs to 549 residues: Threonine--tRNA ligase catalytic subunit (549 aa).

The segment at 142-437 (DHRIIGDRLD…LLEHFRGKLP (296 aa)) is catalytic. 3 residues coordinate Zn(2+): C235, H286, and H414.

Belongs to the class-II aminoacyl-tRNA synthetase family. As to quaternary structure, homodimer. Probably interacts with its editing subunit. Zn(2+) serves as cofactor.

It is found in the cytoplasm. The catalysed reaction is tRNA(Thr) + L-threonine + ATP = L-threonyl-tRNA(Thr) + AMP + diphosphate + H(+). In terms of biological role, catalyzes the attachment of threonine to tRNA(Thr) in a two-step reaction: L-threonine is first activated by ATP to form Thr-AMP and then transferred to the acceptor end of tRNA(Thr). Also activates L-serine and transfers it to tRNA(Thr) but cannot deacylate incorrectly charged amino acid; unlike most archaea the editing function is found in a freestanding protein. This Sulfolobus acidocaldarius (strain ATCC 33909 / DSM 639 / JCM 8929 / NBRC 15157 / NCIMB 11770) protein is Threonine--tRNA ligase catalytic subunit.